Here is a 299-residue protein sequence, read N- to C-terminus: Recombination-associated protein RdgC (299 aa).

The protein belongs to the RdgC family.

It is found in the cytoplasm. The protein resides in the nucleoid. In terms of biological role, may be involved in recombination. The chain is Recombination-associated protein RdgC from Bordetella bronchiseptica (strain ATCC BAA-588 / NCTC 13252 / RB50) (Alcaligenes bronchisepticus).